The sequence spans 473 residues: H(+)/Cl(-) exchange transporter ClcA (473 aa).

Residues 1 to 32 (MKTDTSTFLAQQIVRLRRRDQIRRLMQRDKTP) are Cytoplasmic-facing. Residues 33–69 (LAILFMAAVVGTLTGLVGVAFEKTVSWVQNMRIGALV) traverse the membrane as a helical segment. At 70-76 (QVADHAF) the chain is on the periplasmic side. A helical membrane pass occupies residues 77-100 (LLWPLAFILSALLAMVGYFLVRKF). The Selectivity filter part_1 motif lies at 106–110 (GSGIP). Residue Ser107 coordinates chloride. The segment at residues 109–116 (IPEIEGAL) is an intramembrane region (helical). Residues 117–123 (EELRPVR) lie on the Cytoplasmic side of the membrane. A run of 2 helical transmembrane segments spans residues 124-141 (WWRV…TLGA) and 148-166 (EGPT…LDVF). Residues 146–150 (GREGP) carry the Selectivity filter part_2 motif. The Cytoplasmic segment spans residues 167-176 (RMRSAEARHT). Intramembrane regions (helical) lie at residues 177 to 189 (LLAT…LSAA) and 193 to 201 (PLAGILFII). Residues 202 to 214 (EEMRPQFRYNLIS) are Cytoplasmic-facing. The chain crosses the membrane as a helical span at residues 215 to 232 (IKAVFTGVIMSSIVFRIF). At 233–252 (NGEAPIIEVGKLSDAPVNTL) the chain is on the periplasmic side. The chain crosses the membrane as a helical span at residues 253–281 (WLYLILGIIFGCVGPVFNSLVLRTQDMFQ). Over 282 to 287 (RFHGGE) the chain is Cytoplasmic. A helical transmembrane segment spans residues 288-309 (IKKWVLMGGAIGGLCGILGLIE). At 310–329 (PAAAGGGFNLIPIAAAGNFS) the chain is on the periplasmic side. 2 helical membrane-spanning segments follow: residues 330 to 349 (VGLL…LCFS) and 355 to 376 (GIFA…MAAA). Residues 355–359 (GIFAP) carry the Selectivity filter part_3 motif. Chloride is bound by residues Ile356 and Phe357. The Periplasmic segment spans residues 377-386 (VLFPQYHLEA). Positions 387–401 (GTFAIAGMGALMAAS) form an intramembrane region, helical. The segment at residues 402–404 (VRA) is an intramembrane region (note=Loop between two helices). The segment at residues 405–416 (PLTGIVLVLEMT) is an intramembrane region (helical). Residues 417–421 (DNYQL) constitute an intramembrane region (note=Loop between two helices). The chain crosses the membrane as a helical span at residues 422–438 (ILPMIITCLGATLLAQF). The Cytoplasmic portion of the chain corresponds to 439–473 (LGGKPLYSTILARTLAKQDAEQAAKNQNAPAGENT). A chloride-binding site is contributed by Tyr445.

It belongs to the chloride channel (TC 2.A.49) family. ClcA subfamily. In terms of assembly, homodimer.

The protein resides in the cell inner membrane. It carries out the reaction 2 chloride(in) + H(+)(out) = 2 chloride(out) + H(+)(in). Functionally, proton-coupled chloride transporter. Functions as antiport system and exchanges two chloride ions for 1 proton. Probably acts as an electrical shunt for an outwardly-directed proton pump that is linked to amino acid decarboxylation, as part of the extreme acid resistance (XAR) response. This is H(+)/Cl(-) exchange transporter ClcA from Salmonella typhi.